We begin with the raw amino-acid sequence, 482 residues long: ATP synthase subunit beta, chloroplastic (482 aa).

168 to 175 (GGAGVGKT) is an ATP binding site.

The protein belongs to the ATPase alpha/beta chains family. As to quaternary structure, F-type ATPases have 2 components, CF(1) - the catalytic core - and CF(0) - the membrane proton channel. CF(1) has five subunits: alpha(3), beta(3), gamma(1), delta(1), epsilon(1). CF(0) has four main subunits: a(1), b(1), b'(1) and c(9-12).

The protein resides in the plastid. The protein localises to the chloroplast thylakoid membrane. The enzyme catalyses ATP + H2O + 4 H(+)(in) = ADP + phosphate + 5 H(+)(out). Produces ATP from ADP in the presence of a proton gradient across the membrane. The catalytic sites are hosted primarily by the beta subunits. The protein is ATP synthase subunit beta, chloroplastic of Gnetum parvifolium (Small-leaved jointfir).